Here is a 96-residue protein sequence, read N- to C-terminus: Glutamyl-tRNA(Gln) amidotransferase subunit C (96 aa).

It belongs to the GatC family. As to quaternary structure, heterotrimer of A, B and C subunits.

The catalysed reaction is L-glutamyl-tRNA(Gln) + L-glutamine + ATP + H2O = L-glutaminyl-tRNA(Gln) + L-glutamate + ADP + phosphate + H(+). The enzyme catalyses L-aspartyl-tRNA(Asn) + L-glutamine + ATP + H2O = L-asparaginyl-tRNA(Asn) + L-glutamate + ADP + phosphate + 2 H(+). In terms of biological role, allows the formation of correctly charged Asn-tRNA(Asn) or Gln-tRNA(Gln) through the transamidation of misacylated Asp-tRNA(Asn) or Glu-tRNA(Gln) in organisms which lack either or both of asparaginyl-tRNA or glutaminyl-tRNA synthetases. The reaction takes place in the presence of glutamine and ATP through an activated phospho-Asp-tRNA(Asn) or phospho-Glu-tRNA(Gln). The sequence is that of Glutamyl-tRNA(Gln) amidotransferase subunit C from Nostoc sp. (strain PCC 7120 / SAG 25.82 / UTEX 2576).